Reading from the N-terminus, the 368-residue chain is 1-deoxy-D-xylulose 5-phosphate reductoisomerase (368 aa).

The NADPH site is built by T9, G10, S11, I12, N35, and N106. Residue K107 participates in 1-deoxy-D-xylulose 5-phosphate binding. E108 contacts NADPH. Position 132 (D132) interacts with Mn(2+). Residues S133, E134, S158, and H181 each coordinate 1-deoxy-D-xylulose 5-phosphate. E134 lines the Mn(2+) pocket. G187 is a binding site for NADPH. 1-deoxy-D-xylulose 5-phosphate is bound by residues S194, N199, K200, and E203. E203 is a Mn(2+) binding site.

Belongs to the DXR family. Requires Mg(2+) as cofactor. It depends on Mn(2+) as a cofactor.

The enzyme catalyses 2-C-methyl-D-erythritol 4-phosphate + NADP(+) = 1-deoxy-D-xylulose 5-phosphate + NADPH + H(+). The protein operates within isoprenoid biosynthesis; isopentenyl diphosphate biosynthesis via DXP pathway; isopentenyl diphosphate from 1-deoxy-D-xylulose 5-phosphate: step 1/6. Catalyzes the NADPH-dependent rearrangement and reduction of 1-deoxy-D-xylulose-5-phosphate (DXP) to 2-C-methyl-D-erythritol 4-phosphate (MEP). This chain is 1-deoxy-D-xylulose 5-phosphate reductoisomerase, found in Mycoplasmoides gallisepticum (strain R(low / passage 15 / clone 2)) (Mycoplasma gallisepticum).